The chain runs to 257 residues: Snake venom serine protease rhinocerase 4 (257 aa).

The signal sequence occupies residues 1 to 17 (VLIRVLANLLVLQLSYA). A propeptide spanning residues 18–23 (QKSSEL) is cleaved from the precursor. The region spanning 24-248 (VIGGAECNIN…YTDWIRSIIG (225 aa)) is the Peptidase S1 domain. 6 disulfide bridges follow: C30–C162, C49–C65, C97–C255, C141–C209, C173–C188, and C199–C224. N-linked (GlcNAc...) asparagine glycosylation is present at N43. The active-site Charge relay system is H64. N-linked (GlcNAc...) asparagine glycosylation is found at N78 and N100. Catalysis depends on D109, which acts as the Charge relay system. Residue S203 is the Charge relay system of the active site. A glycan (N-linked (GlcNAc...) asparagine) is linked at N250.

Belongs to the peptidase S1 family. Snake venom subfamily. As to expression, expressed by the venom gland.

The protein localises to the secreted. Its function is as follows. Snake venom serine protease that may act in the hemostasis system of the prey. The sequence is that of Snake venom serine protease rhinocerase 4 from Bitis rhinoceros (West African gaboon viper).